An 801-amino-acid polypeptide reads, in one-letter code: Phenylalanine--tRNA ligase beta subunit (801 aa).

The tRNA-binding domain maps to 39–153 (AEGLSKLVVG…EEAVPGDAIF (115 aa)). Positions 406–481 (TEPVEVSTSL…RIYGYDKLPT (76 aa)) constitute a B5 domain. Residues Asp-459, Asp-465, Glu-468, and Glu-469 each coordinate Mg(2+). Positions 708-801 (TKFPAMTRDI…LTEQVGAEVR (94 aa)) constitute an FDX-ACB domain.

It belongs to the phenylalanyl-tRNA synthetase beta subunit family. Type 1 subfamily. Tetramer of two alpha and two beta subunits. The cofactor is Mg(2+).

It localises to the cytoplasm. The enzyme catalyses tRNA(Phe) + L-phenylalanine + ATP = L-phenylalanyl-tRNA(Phe) + AMP + diphosphate + H(+). The sequence is that of Phenylalanine--tRNA ligase beta subunit from Streptococcus pyogenes serotype M18 (strain MGAS8232).